A 453-amino-acid polypeptide reads, in one-letter code: Chromosomal replication initiator protein DnaA (453 aa).

Positions 1–74 (MKEKQFWNRI…GFEIYDAEIT (74 aa)) are domain I, interacts with DnaA modulators. The interval 74–113 (TPHYIFTKPQDTTSSQVEEATNLTLYDYSPKLVSIPYSDT) is domain II. A domain III, AAA+ region region spans residues 114-331 (GLKEKYTFDN…GAINDITLIA (218 aa)). ATP contacts are provided by glycine 158, glycine 160, lysine 161, and threonine 162. Positions 332 to 453 (RVKKIKDITI…EIESIKKKIK (122 aa)) are domain IV, binds dsDNA.

This sequence belongs to the DnaA family. As to quaternary structure, oligomerizes as a right-handed, spiral filament on DNA at oriC. Interacts (via domains I and III) with CcrZ.

The protein resides in the cytoplasm. With respect to regulation, ccrZ stimulates DnaA, possibly by phosphorylation of an intermediate molecule, to initiate DNA replication. Plays an essential role in the initiation and regulation of chromosomal replication. ATP-DnaA binds to the origin of replication (oriC) to initiate formation of the DNA replication initiation complex once per cell cycle. Binds the DnaA box (a 9 base pair repeat at the origin) and separates the double-stranded (ds)DNA. Forms a right-handed helical filament on oriC DNA; dsDNA binds to the exterior of the filament while single-stranded (ss)DNA is stabiized in the filament's interior. The ATP-DnaA-oriC complex binds and stabilizes one strand of the AT-rich DNA unwinding element (DUE), permitting loading of DNA polymerase. After initiation quickly degrades to an ADP-DnaA complex that is not apt for DNA replication. Binds acidic phospholipids. Its function is as follows. Mutations in this gene suppress a deletion of cell cycle regulator ccrZ. This chain is Chromosomal replication initiator protein DnaA, found in Streptococcus pneumoniae serotype 2 (strain D39 / NCTC 7466).